A 246-amino-acid polypeptide reads, in one-letter code: Protein lin-37 homolog (246 aa).

Met-1 is subject to N-acetylmethionine. Residues Lys-5 and Lys-7 each participate in a glycyl lysine isopeptide (Lys-Gly) (interchain with G-Cter in SUMO2) cross-link. Over residues 39-55 the composition is skewed to basic and acidic residues; it reads RLDEEAGKTPLDTHNKD. Disordered regions lie at residues 39–90 and 129–208; these read RLDE…GGPQ and VRER…TLIY. Phosphoserine is present on residues Ser-135 and Ser-138. Thr-167 carries the phosphothreonine modification. Residues Ser-182 and Ser-202 each carry the phosphoserine modification.

Component of the DREAM complex (also named LINC complex) at least composed of E2F4, E2F5, LIN9, LIN37, LIN52, LIN54, MYBL1, MYBL2, RBL1, RBL2, RBBP4, TFDP1 and TFDP2. The complex exists in quiescent cells where it represses cell cycle-dependent genes. It dissociates in S phase when LIN9, LIN37, LIN52 and LIN54 form a subcomplex that binds to MYBL2.

This chain is Protein lin-37 homolog (Lin37), found in Mus musculus (Mouse).